The chain runs to 240 residues: Adenylate dimethylallyltransferase (240 aa).

Belongs to the isopentenyl transferase family.

The enzyme catalyses dimethylallyl diphosphate + AMP = N(6)-(dimethylallyl)adenosine 5'-phosphate + diphosphate. Its function is as follows. Transfers dimethylallyl groups to AMP as part of the biosynthesis of cytokinin phytohormones. In Agrobacterium vitis (Rhizobium vitis), this protein is Adenylate dimethylallyltransferase (ipt).